Reading from the N-terminus, the 542-residue chain is CTP synthase (542 aa).

Residues 1 to 265 (MTRYIFVTGG…DEIIVERFGL (265 aa)) form an amidoligase domain region. Ser-13 provides a ligand contact to CTP. Position 13 (Ser-13) interacts with UTP. Residues 14-19 (SLGKGI) and Asp-71 contribute to the ATP site. Mg(2+)-binding residues include Asp-71 and Glu-139. CTP contacts are provided by residues 146 to 148 (DIE), 186 to 191 (KTKPTQ), and Lys-222. Residues 186 to 191 (KTKPTQ) and Lys-222 contribute to the UTP site. The region spanning 290–541 (TIAMVGKYME…VRAALENAGG (252 aa)) is the Glutamine amidotransferase type-1 domain. Gly-351 is a binding site for L-glutamine. Cys-378 (nucleophile; for glutamine hydrolysis) is an active-site residue. L-glutamine contacts are provided by residues 379–382 (LGLQ), Glu-402, and Arg-469. Catalysis depends on residues His-514 and Glu-516.

Belongs to the CTP synthase family. As to quaternary structure, homotetramer.

It catalyses the reaction UTP + L-glutamine + ATP + H2O = CTP + L-glutamate + ADP + phosphate + 2 H(+). It carries out the reaction L-glutamine + H2O = L-glutamate + NH4(+). The enzyme catalyses UTP + NH4(+) + ATP = CTP + ADP + phosphate + 2 H(+). It participates in pyrimidine metabolism; CTP biosynthesis via de novo pathway; CTP from UDP: step 2/2. With respect to regulation, allosterically activated by GTP, when glutamine is the substrate; GTP has no effect on the reaction when ammonia is the substrate. The allosteric effector GTP functions by stabilizing the protein conformation that binds the tetrahedral intermediate(s) formed during glutamine hydrolysis. Inhibited by the product CTP, via allosteric rather than competitive inhibition. Functionally, catalyzes the ATP-dependent amination of UTP to CTP with either L-glutamine or ammonia as the source of nitrogen. Regulates intracellular CTP levels through interactions with the four ribonucleotide triphosphates. This chain is CTP synthase, found in Hahella chejuensis (strain KCTC 2396).